Consider the following 874-residue polypeptide: Interleukin-12 receptor subunit beta-2 (874 aa).

An N-terminal signal peptide occupies residues 1–23 (MAQTVRECSLALLFLFMWLLIKA). Residues 24 to 637 (NIDVCKLGTV…REFCPQGKAN (614 aa)) lie on the Extracellular side of the membrane. Residues Asn-48, Asn-101, Asn-114, Asn-142, Asn-151, Asn-169, Asn-179, Asn-224, Asn-252, Asn-279, Asn-287, Asn-323, Asn-391, and Asn-495 are each glycosylated (N-linked (GlcNAc...) asparagine). Fibronectin type-III domains lie at 139 to 237 (PPQN…FLDI), 242 to 335 (PPWD…TPEE), 336 to 430 (EPVG…NIVD), 438 to 530 (APHQ…IRGD), and 536 to 635 (PVSG…PQGK). A WSXWS motif motif is present at residues 321–325 (WSNWS). Residues 638-658 (WKAFVISSICIAIITVGTFSI) form a helical membrane-spanning segment. Topologically, residues 659-874 (RYFRQKAFTL…GYDSLMSNEA (216 aa)) are cytoplasmic. Residues 677 to 685 (YSRTIPDPA) carry the Box 1 motif motif. Residues Tyr-757, Tyr-804, and Tyr-811 each carry the phosphotyrosine modification.

It belongs to the type I cytokine receptor family. Type 2 subfamily. Heterodimer/heterooligomer; disulfide-linked. The functional high affinity IL12 receptor is composed of I12RB1 and IL12RB2. Il12RB2 binds JAK2 (via its N-terminal) through a membrane-proximal region of the cytoplasmic domain. Post-translationally, on IL12 stimulation, phosphorylated on C-terminal tyrosine residues. Phosphorylation of any one of Tyr-757, Tyr-804 or Tyr-811 can activate STAT4, IFN-gamma production, and T-cell proliferation. Tyr-811 is the dominant site of cell proliferation. Expressed in developing T-helper (TH) cells.

It localises to the membrane. Functionally, receptor for interleukin-12. This subunit is the signaling component coupling to the JAK2/STAT4 pathway. Promotes the proliferation of T-cells as well as NK cells. Induces the promotion of T-cells towards the Th1 phenotype by strongly enhancing IFN-gamma production. Can also activate STAT3. The polypeptide is Interleukin-12 receptor subunit beta-2 (Il12rb2) (Mus musculus (Mouse)).